The following is a 628-amino-acid chain: Beta-galactosidase large subunit (628 aa).

Glu-468 (proton donor) is an active-site residue. Glu-536 serves as the catalytic Nucleophile.

This sequence belongs to the glycosyl hydrolase 2 family. Heterodimer of a large (LacL) and a small subunit (LacM).

It carries out the reaction Hydrolysis of terminal non-reducing beta-D-galactose residues in beta-D-galactosides.. Functionally, component of a beta-galactosidase. The sequence is that of Beta-galactosidase large subunit from Lactobacillus helveticus (Lactobacillus suntoryeus).